The primary structure comprises 71 residues: Conotoxin TxMMSK-05 (71 aa).

The first 20 residues, Met1–Ala20, serve as a signal peptide directing secretion. Residues Val21–Arg52 constitute a propeptide that is removed on maturation. Intrachain disulfides connect Cys54-Cys70, Cys55-Cys66, and Cys60-Cys69.

It belongs to the conotoxin M superfamily. As to expression, expressed by the venom duct.

It localises to the secreted. This is Conotoxin TxMMSK-05 from Conus textile (Cloth-of-gold cone).